A 329-amino-acid polypeptide reads, in one-letter code: GTPase Obg (329 aa).

In terms of domain architecture, Obg spans 1-159 (MQFIDQARIS…WPLQLELKLL (159 aa)). Positions 160-328 (AEVGIIGLPN…MLDRVWSELG (169 aa)) constitute an OBG-type G domain. Residues 166 to 173 (GLPNAGKS), 191 to 195 (FTTLI), 213 to 216 (DIPG), 280 to 283 (NKQE), and 309 to 311 (SAA) contribute to the ATP site. The Mg(2+) site is built by Ser173 and Thr193.

This sequence belongs to the TRAFAC class OBG-HflX-like GTPase superfamily. OBG GTPase family. Monomer. It depends on Mg(2+) as a cofactor.

Its subcellular location is the cytoplasm. An essential GTPase which binds GTP, GDP and possibly (p)ppGpp with moderate affinity, with high nucleotide exchange rates and a fairly low GTP hydrolysis rate. Plays a role in control of the cell cycle, stress response, ribosome biogenesis and in those bacteria that undergo differentiation, in morphogenesis control. This is GTPase Obg from Synechococcus sp. (strain CC9311).